The sequence spans 159 residues: NAD(P)H-quinone oxidoreductase subunit N (159 aa).

The protein belongs to the complex I NdhN subunit family. NDH-1 can be composed of about 15 different subunits; different subcomplexes with different compositions have been identified which probably have different functions.

The protein resides in the cell inner membrane. It catalyses the reaction a plastoquinone + NADH + (n+1) H(+)(in) = a plastoquinol + NAD(+) + n H(+)(out). The enzyme catalyses a plastoquinone + NADPH + (n+1) H(+)(in) = a plastoquinol + NADP(+) + n H(+)(out). NDH-1 shuttles electrons from an unknown electron donor, via FMN and iron-sulfur (Fe-S) centers, to quinones in the respiratory and/or the photosynthetic chain. The immediate electron acceptor for the enzyme in this species is believed to be plastoquinone. Couples the redox reaction to proton translocation, and thus conserves the redox energy in a proton gradient. Cyanobacterial NDH-1 also plays a role in inorganic carbon-concentration. The protein is NAD(P)H-quinone oxidoreductase subunit N of Gloeobacter violaceus (strain ATCC 29082 / PCC 7421).